Reading from the N-terminus, the 693-residue chain is DNA ligase (693 aa).

NAD(+) is bound by residues 45–49, 94–95, and Glu-131; these read DSEYD and SI. The active-site N6-AMP-lysine intermediate is Lys-133. NAD(+)-binding residues include Arg-154, Glu-190, Lys-307, and Lys-331. Positions 429, 432, 447, and 453 each coordinate Zn(2+). The 79-residue stretch at 615–693 folds into the BRCT domain; that stretch reads ASSSKLEGKT…EEGLLSLLAE (79 aa).

It belongs to the NAD-dependent DNA ligase family. LigA subfamily. Mg(2+) serves as cofactor. It depends on Mn(2+) as a cofactor.

It carries out the reaction NAD(+) + (deoxyribonucleotide)n-3'-hydroxyl + 5'-phospho-(deoxyribonucleotide)m = (deoxyribonucleotide)n+m + AMP + beta-nicotinamide D-nucleotide.. In terms of biological role, DNA ligase that catalyzes the formation of phosphodiester linkages between 5'-phosphoryl and 3'-hydroxyl groups in double-stranded DNA using NAD as a coenzyme and as the energy source for the reaction. It is essential for DNA replication and repair of damaged DNA. The chain is DNA ligase from Methylobacillus flagellatus (strain ATCC 51484 / DSM 6875 / VKM B-1610 / KT).